We begin with the raw amino-acid sequence, 320 residues long: Cytochrome f (320 aa).

Residues 1-35 form the signal peptide; sequence MQTRNTFSWIKEQITRSISASLMIYIITRTSISNA. The heme site is built by tyrosine 36, cysteine 56, cysteine 59, and histidine 60. A helical transmembrane segment spans residues 286-306; the sequence is VQGLLFFFAAVILAQIFLVLK.

This sequence belongs to the cytochrome f family. As to quaternary structure, the 4 large subunits of the cytochrome b6-f complex are cytochrome b6, subunit IV (17 kDa polypeptide, petD), cytochrome f and the Rieske protein, while the 4 small subunits are PetG, PetL, PetM and PetN. The complex functions as a dimer. The cofactor is heme.

Its subcellular location is the plastid. It localises to the chloroplast thylakoid membrane. Component of the cytochrome b6-f complex, which mediates electron transfer between photosystem II (PSII) and photosystem I (PSI), cyclic electron flow around PSI, and state transitions. This chain is Cytochrome f, found in Helianthus annuus (Common sunflower).